Consider the following 234-residue polypeptide: MANVALIGATGMVGGHILSTLLESPAVARVDTISRKTPPAAASAPQAKLTTFVSDDTSRWASQLSALTPTPSIFMSAFGTTRAAAGGFDNQYKVEHGLNVEMARAARDAGTKVYVLISSSGASKTSSFAYPRMKGEIEDDVKALGFERTVILRPGLISGQREESRPAEAAVRFIAGFAGKIYSGLKDGWAQDADVIARAAVNAGLKALEGDVPAGSEKVWVLTGSDIIRFGGKN.

A mitochondrion-targeting transit peptide spans 1–28 (MANVALIGATGMVGGHILSTLLESPAVA).

It belongs to the FMP52 family.

The protein resides in the mitochondrion outer membrane. This is Protein fmp52, mitochondrial (fmp52) from Aspergillus clavatus (strain ATCC 1007 / CBS 513.65 / DSM 816 / NCTC 3887 / NRRL 1 / QM 1276 / 107).